The following is a 210-amino-acid chain: Protoporphyrinogen IX oxidase (210 aa).

Helical transmembrane passes span 22 to 42 (WFKA…FYLV), 74 to 94 (YNII…GLIF), 103 to 123 (GWLH…FYCG), 141 to 161 (FRAL…LAVF), and 165 to 185 (LPLD…AASI). His-27 provides a ligand contact to heme. Residue Lys-108 participates in heme binding.

It belongs to the HemJ family. As to quaternary structure, homodimer. Can also form higher oligomers, most probably tetramers. Interacts with Sll1106, however it is unlikely that Sll1106 is required for PPO function. Heme b is required as a cofactor.

Its subcellular location is the cell membrane. The catalysed reaction is protoporphyrinogen IX + 3 A = protoporphyrin IX + 3 AH2. It participates in porphyrin-containing compound metabolism; protoporphyrin-IX biosynthesis; protoporphyrin-IX from protoporphyrinogen-IX: step 1/1. Its function is as follows. Catalyzes the oxidation of protoporphyrinogen IX to protoporphyrin IX. Is involved in the biosynthesis of tetrapyrrole molecules like heme and chlorophyll. Does not use oxygen or artificial electron acceptors such as menadione or benzoquinone. Is functionally coupled with coproporphyrinogen III oxidase (CPO). Is essential for growth. This is Protoporphyrinogen IX oxidase from Synechocystis sp. (strain ATCC 27184 / PCC 6803 / Kazusa).